A 275-amino-acid chain; its full sequence is 2,3,4,5-tetrahydropyridine-2,6-dicarboxylate N-succinyltransferase (275 aa).

Positions 104 and 141 each coordinate substrate.

Belongs to the transferase hexapeptide repeat family. As to quaternary structure, homotrimer.

It is found in the cytoplasm. The catalysed reaction is (S)-2,3,4,5-tetrahydrodipicolinate + succinyl-CoA + H2O = (S)-2-succinylamino-6-oxoheptanedioate + CoA. Its pathway is amino-acid biosynthesis; L-lysine biosynthesis via DAP pathway; LL-2,6-diaminopimelate from (S)-tetrahydrodipicolinate (succinylase route): step 1/3. This is 2,3,4,5-tetrahydropyridine-2,6-dicarboxylate N-succinyltransferase from Aeromonas salmonicida (strain A449).